The following is a 701-amino-acid chain: L-glutamate oxidase precursor (701 aa).

A signal peptide spans 1–14; that stretch reads MTTDTARRHTGAER. FAD contacts are provided by Ala69, Glu88, Ala89, Arg97, Met123, Arg124, Met354, and Ser409. Positions 481–520 are excised as a propeptide; sequence LALPQSVRNLPTGLLGAHPSVDESRIGEEQVEYYRNSELR. FAD contacts are provided by Glu645, Trp653, and Ile654. Positions 684-701 are excised as a propeptide; it reads RRGAAAATEPMREEALTS.

The protein belongs to the flavin monoamine oxidase family. LGOX subfamily. The LGOX precursor forms homodimers. The mature enzyme is a heterohexamer composed of 2 alpha chains, 2 beta chains and 2 gamma chains (alpha2beta2gamma2). The cofactor is FAD. Post-translationally, the precursor form is proteolytically cleaved by an endopeptidase into alpha, beta and gamma chains, which form the stable mature enzyme. Activation by proteolysis occurs after secretion.

The protein localises to the secreted. The catalysed reaction is L-glutamate + O2 + H2O = H2O2 + 2-oxoglutarate + NH4(+). Produced as a single polypeptide precursor and is activated by proteolytic cleavage. The LGOX precursor is an active enzyme, but it exhibits lower catalytic efficiency and lower thermostability compared with the mature hexameric LGOX. The mature form is strongly inhibited by p-chloromercuribenzoate, but not by CuCl(2), EDTA and diethyldithiocarbamate. Catalyzes the oxidative deamination of L-glutamate to 2-ketoglutarate along with the production of ammonia and hydrogen peroxide. Shows strict substrate specificity for L-glutamate, and exhibits only very weak activity with L-aspartate. This Streptomyces sp protein is L-glutamate oxidase precursor.